Consider the following 399-residue polypeptide: Arylacetamide deacetylase (399 aa).

Residues 1-4 (MRKK) are Cytoplasmic-facing. A helical; Signal-anchor for type II membrane protein transmembrane segment spans residues 5–25 (YFGFLILGVLLAGYIYVPLPD). At 26 to 399 (NVEEPWKIML…QYINWLHENL (374 aa)) the chain is on the lumenal side. Positions 111-113 (HGG) match the Involved in the stabilization of the negatively charged intermediate by the formation of the oxyanion hole motif. Residues cysteine 116 and cysteine 340 are joined by a disulfide bond. Residue serine 189 is part of the active site. Asparagine 282 carries N-linked (GlcNAc...) asparagine glycosylation. Catalysis depends on residues aspartate 343 and histidine 373.

The protein belongs to the 'GDXG' lipolytic enzyme family.

The protein localises to the endoplasmic reticulum membrane. The protein resides in the microsome membrane. It carries out the reaction a triacylglycerol + H2O = a diacylglycerol + a fatty acid + H(+). In terms of biological role, displays cellular triglyceride lipase activity in liver, increases the levels of intracellular fatty acids derived from the hydrolysis of newly formed triglyceride stores and plays a role in very low-density lipoprotein assembly. Displays serine esterase activity in liver. Deacetylates a variety of arylacetamide substrates, including xenobiotic compounds and procarcinogens, converting them to the primary arylamide compounds and increasing their toxicity. The polypeptide is Arylacetamide deacetylase (AADAC) (Bos taurus (Bovine)).